A 409-amino-acid chain; its full sequence is UPF0261 protein Spro_4740 (409 aa).

It belongs to the UPF0261 family.

This chain is UPF0261 protein Spro_4740, found in Serratia proteamaculans (strain 568).